A 145-amino-acid polypeptide reads, in one-letter code: MKFRTIYDEERPAPVLECKDESLCLAYQCTETSIEKLVKLANQNPSYLHAFAGDPTRQPEYGECPSPLDYQDALEIVARGEEAFYSLPANIRVNFSNPMEFLSWLEDPANYDEVEKLGLLDPEKVQIRKSKLQKDQKEEVSSEEK.

Belongs to the microviridae B protein family.

The protein localises to the host cytoplasm. Functionally, participates in the assembly of the viral procapsid in the cytoplasm. Released from the procapsid upon genome packaging, possibly through affinity displacement by the protein ORF8, or by proteolysis. The polypeptide is Internal scaffolding protein VP3 (Chlamydia phage 1 (Bacteriophage Chp1)).